We begin with the raw amino-acid sequence, 397 residues long: Dual-specificity RNA methyltransferase RlmN (397 aa).

The Proton acceptor role is filled by E116. Residues 122-366 (EDDRGTLCIS…SPIRKTRGDD (245 aa)) form the Radical SAM core domain. C129 and C371 are disulfide-bonded. C136, C140, and C143 together coordinate [4Fe-4S] cluster. S-adenosyl-L-methionine contacts are provided by residues 195–196 (GE), S227, 249–251 (SFH), and N328. The active-site S-methylcysteine intermediate is the C371.

The protein belongs to the radical SAM superfamily. RlmN family. It depends on [4Fe-4S] cluster as a cofactor.

Its subcellular location is the cytoplasm. It catalyses the reaction adenosine(2503) in 23S rRNA + 2 reduced [2Fe-2S]-[ferredoxin] + 2 S-adenosyl-L-methionine = 2-methyladenosine(2503) in 23S rRNA + 5'-deoxyadenosine + L-methionine + 2 oxidized [2Fe-2S]-[ferredoxin] + S-adenosyl-L-homocysteine. It carries out the reaction adenosine(37) in tRNA + 2 reduced [2Fe-2S]-[ferredoxin] + 2 S-adenosyl-L-methionine = 2-methyladenosine(37) in tRNA + 5'-deoxyadenosine + L-methionine + 2 oxidized [2Fe-2S]-[ferredoxin] + S-adenosyl-L-homocysteine. In terms of biological role, specifically methylates position 2 of adenine 2503 in 23S rRNA and position 2 of adenine 37 in tRNAs. m2A2503 modification seems to play a crucial role in the proofreading step occurring at the peptidyl transferase center and thus would serve to optimize ribosomal fidelity. This Ruegeria sp. (strain TM1040) (Silicibacter sp.) protein is Dual-specificity RNA methyltransferase RlmN.